The chain runs to 184 residues: ATP synthase subunit b, chloroplastic (184 aa).

Residues 27-49 traverse the membrane as a helical segment; that stretch reads LATNLINLSVVLGVLIFFGKGVL.

Belongs to the ATPase B chain family. As to quaternary structure, F-type ATPases have 2 components, F(1) - the catalytic core - and F(0) - the membrane proton channel. F(1) has five subunits: alpha(3), beta(3), gamma(1), delta(1), epsilon(1). F(0) has four main subunits: a(1), b(1), b'(1) and c(10-14). The alpha and beta chains form an alternating ring which encloses part of the gamma chain. F(1) is attached to F(0) by a central stalk formed by the gamma and epsilon chains, while a peripheral stalk is formed by the delta, b and b' chains.

The protein resides in the plastid. It localises to the chloroplast thylakoid membrane. In terms of biological role, f(1)F(0) ATP synthase produces ATP from ADP in the presence of a proton or sodium gradient. F-type ATPases consist of two structural domains, F(1) containing the extramembraneous catalytic core and F(0) containing the membrane proton channel, linked together by a central stalk and a peripheral stalk. During catalysis, ATP synthesis in the catalytic domain of F(1) is coupled via a rotary mechanism of the central stalk subunits to proton translocation. Component of the F(0) channel, it forms part of the peripheral stalk, linking F(1) to F(0). The chain is ATP synthase subunit b, chloroplastic from Helianthus annuus (Common sunflower).